Consider the following 5207-residue polypeptide: NBPF family member NBPF20 (5207 aa).

Olduvai domains follow at residues 5 to 77 (SREL…PSCP), 80 to 135 (SREL…LDVD), 136 to 228 (RTKK…RSKK), 229 to 321 (ERRR…PSCP), 324 to 379 (SREL…LDVD), 380 to 472 (RTKK…RSKK), 473 to 565 (ERRR…PSCP), 568 to 623 (SREL…LDVD), 624 to 716 (RTKK…RSKK), 717 to 809 (ERRR…PSCP), 812 to 867 (SREL…LDVD), 868 to 960 (RTKK…RSKK), 961 to 1053 (ERRR…PSCP), 1056 to 1111 (SREL…LDVD), 1112 to 1204 (RTKK…RSKK), 1205 to 1297 (ERRR…PSCP), 1300 to 1355 (SREL…LDVD), 1356 to 1448 (RTKK…RSKK), 1449 to 1541 (ERRR…PSCP), 1544 to 1599 (SREL…LDVD), 1600 to 1692 (RTKK…RSKK), 1693 to 1785 (ERRR…PSCP), 1788 to 1843 (SREL…LDVD), 1844 to 1936 (RTKK…RSKK), 1937 to 2029 (ERRR…PSCP), 2032 to 2087 (SREL…LDVD), 2088 to 2180 (RTKK…RSKK), 2181 to 2273 (ERRR…PSCP), 2276 to 2331 (SREL…LDVD), 2332 to 2424 (RTKK…RSKK), 2425 to 2517 (ERRR…PSCP), 2520 to 2575 (SREL…LDVD), 2576 to 2668 (RTKK…RSKK), 2669 to 2761 (ERRR…PSCP), 2764 to 2819 (SREL…LDVD), 2820 to 2912 (RTKK…RSKK), 2913 to 3005 (ERRR…PSCP), 3008 to 3063 (SREL…LDVD), 3064 to 3156 (RTKK…RSKK), 3157 to 3249 (ERRR…PSCP), 3252 to 3307 (SREL…LDVD), 3308 to 3400 (RTKK…RSKK), 3401 to 3493 (ERRR…PSCP), 3496 to 3551 (SREL…LDVD), 3552 to 3644 (RTKK…RSKK), 3645 to 3737 (ERRR…PSCP), 3740 to 3795 (SREL…LDVD), 3796 to 3888 (RTKK…RSKK), 3889 to 3981 (ERRR…PSCP), 3984 to 4039 (SREL…LDVD), 4040 to 4132 (RTKK…RSKK), 4133 to 4225 (ERRR…PSCP), 4228 to 4283 (SREL…LDVD), 4284 to 4376 (RTKK…RSKK), 4377 to 4452 (ERRR…LDVD), 4453 to 4545 (RTKK…RSKK), 4546 to 4621 (ERRR…LDVD), 4622 to 4713 (RTKK…PSCP), 4716 to 4771 (SREL…LDVD), 4772 to 4864 (RTKK…RSKK), 4865 to 4957 (ERRR…PSCP), 4960 to 5015 (SREL…LDVD), 5016 to 5108 (RTKK…RSKK), and 5109 to 5207 (KRRR…IFPQ). 2 disordered regions span residues 137-157 (TKKD…LSRE) and 215-256 (KGKG…LDEK). Basic residues predominate over residues 216–234 (GKGKKRRGRRSKKERRRGR). 2 disordered regions span residues 381-403 (TKKD…RELL) and 459-513 (KGKG…DRSY). A compositionally biased stretch (basic residues) spans 460–478 (GKGKKRRGRRSKKERRRGR). Over residues 492–502 (LSRELLDEKGP) the composition is skewed to basic and acidic residues. 2 disordered regions span residues 625-647 (TKKD…RELL) and 703-744 (KGKG…LDEK). The segment covering 704 to 722 (GKGKKRRGRRSKKERRRGR) has biased composition (basic residues). Disordered stretches follow at residues 869 to 891 (TKKD…RELL) and 947 to 1001 (KGKG…DRSY). Positions 948–966 (GKGKKRRGRRSKKERRRGR) are enriched in basic residues. Over residues 980-990 (LSRELLDEKGP) the composition is skewed to basic and acidic residues. Disordered stretches follow at residues 1113-1135 (TKKD…RELL) and 1191-1245 (KGKG…DRSY). The span at 1192–1210 (GKGKKRRGRRSKKERRRGR) shows a compositional bias: basic residues. Residues 1224 to 1234 (LSRELLDEKGP) are compositionally biased toward basic and acidic residues. Disordered regions lie at residues 1357-1379 (TKKD…RELL) and 1435-1489 (KGKG…DRSY). The span at 1436–1454 (GKGKKRRGRRSKKERRRGR) shows a compositional bias: basic residues. Over residues 1468-1478 (LSRELLDEKGP) the composition is skewed to basic and acidic residues. Disordered regions lie at residues 1601 to 1623 (TKKD…RELL) and 1679 to 1733 (KGKG…DRSY). Residues 1680–1698 (GKGKKRRGRRSKKERRRGR) are compositionally biased toward basic residues. Over residues 1712 to 1722 (LSRELLDEKGP) the composition is skewed to basic and acidic residues. Disordered stretches follow at residues 1845–1867 (TKKD…RELL) and 1923–1964 (KGKG…LDEK). Positions 1924-1942 (GKGKKRRGRRSKKERRRGR) are enriched in basic residues. 2 disordered regions span residues 2089 to 2111 (TKKD…RELL) and 2167 to 2208 (KGKG…LDEK). The span at 2168-2186 (GKGKKRRGRRSKKERRRGR) shows a compositional bias: basic residues. Disordered regions lie at residues 2333-2355 (TKKD…RELL) and 2411-2452 (KGKG…LDEK). Residues 2412 to 2430 (GKGKKRRGRRSKKERRRGR) show a composition bias toward basic residues. Disordered stretches follow at residues 2577-2599 (TKKD…RELL) and 2655-2709 (KGKG…DRSY). A compositionally biased stretch (basic residues) spans 2656 to 2674 (GKGKKRRGRRSKKERRRGR). Basic and acidic residues predominate over residues 2688–2698 (LSRELLDEKGP). 2 disordered regions span residues 2821–2843 (TKKD…RELL) and 2899–2953 (KGKG…DRSY). The segment covering 2900 to 2918 (GKGKKRRGRRSKKERRRGR) has biased composition (basic residues). Positions 2932 to 2942 (LSRELLDEKGP) are enriched in basic and acidic residues. Disordered stretches follow at residues 3065 to 3087 (TKKD…RELL) and 3143 to 3197 (KGKG…DRSY). Residues 3144–3162 (GKGKKRRGRRSKKERRRGR) are compositionally biased toward basic residues. Basic and acidic residues predominate over residues 3176 to 3186 (LSRELLDEKGP). Disordered stretches follow at residues 3309–3331 (TKKD…RELL) and 3387–3441 (KGKG…DRSY). Basic residues predominate over residues 3388–3406 (GKGKKRRGRRSKKERRRGR). The span at 3420 to 3430 (LSRELLDEKGP) shows a compositional bias: basic and acidic residues. 2 disordered regions span residues 3553-3575 (TKKD…RELL) and 3631-3672 (KGKG…LDEK). Residues 3632–3650 (GKGKKRRGRRSKKERRRGR) are compositionally biased toward basic residues. Disordered stretches follow at residues 3797 to 3819 (TKKD…RELL) and 3875 to 3916 (KGKG…LDEK). The span at 3876–3894 (GKGKKRRGRRSKKERRRGR) shows a compositional bias: basic residues. 2 disordered regions span residues 4041-4063 (TKKD…RELL) and 4119-4160 (KGKG…LDEK). Residues 4120–4138 (GKGKKRRGRRSKKERRRGR) are compositionally biased toward basic residues. 4 disordered regions span residues 4285-4307 (TKKD…RELL), 4361-4404 (EKKG…LDEK), 4453-4474 (RTKK…LSRE), and 4530-4573 (EKKG…LDEK). A compositionally biased stretch (basic residues) spans 4364 to 4382 (GKGKKRRGRRSKKERRRGR). Residues 4533 to 4551 (GKGKKRRGRRSKKERRRGR) are compositionally biased toward basic residues. Disordered regions lie at residues 4773–4793 (TKKD…LSRE) and 4851–4889 (KGKG…RELL). Residues 4852-4870 (GKGKKRRGRRSKKERRRGR) are compositionally biased toward basic residues. Disordered regions lie at residues 5017–5037 (TKKD…LSRE) and 5094–5128 (KKGK…CPRL). Positions 5096 to 5114 (GKGKKRRGRRSKKKRRRGR) are enriched in basic residues.

This sequence belongs to the NBPF family.

Its subcellular location is the cytoplasm. The chain is NBPF family member NBPF20 from Homo sapiens (Human).